Consider the following 951-residue polypeptide: Kinase suppressor of Ras 2 (951 aa).

A disordered region spans residues 237 to 298 (PPPPPLESGH…PGTPPPSSRK (62 aa)). The segment covering 260–274 (RTPPRTPNIVTTVTP) has biased composition (low complexity). 2 positions are modified to phosphothreonine: T273 and T277. The Phorbol-ester/DAG-type zinc-finger motif lies at 413–457 (KHRFSTKYWMSQTCTVCGKGMLFGLKCKNCKLKCHNKCTKEAPPC). Zn(2+) is bound by residues H414, C426, C429, C439, C442, H447, C450, and C457. S475 is subject to Phosphoserine; by MARK3. 2 disordered regions span residues 489-559 (RYSD…QKKN) and 614-634 (EPTS…DEFE). The span at 494–503 (HISQTLPKTN) shows a compositional bias: polar residues. T498 bears the Phosphothreonine mark. The span at 518–531 (SSSNPSSTTSSTPS) shows a compositional bias: low complexity. The segment covering 532–552 (SPAPPLPPSATPPSPLHPSPQ) has biased composition (pro residues). Residues 667-932 (LEIGELIGKG…TKLMDMLEKL (266 aa)) enclose the Protein kinase domain. 673–681 (IGKGRFGQV) provides a ligand contact to ATP. Residue D787 is the Proton donor/acceptor of the active site. Residues K789 and D804 each coordinate ATP.

Belongs to the protein kinase superfamily. TKL Ser/Thr protein kinase family. As to quaternary structure, heterodimerizes (via N-terminus) with BRAF (via N-terminus) in a MAP2K1/MEK1-dependent manner. Interacts with BRAF; this increases the low intrinsic protein kinase activity of KSR2. Interacts with MAP2K1, forming a heterodimer that can dimerize to form a heterotetramer. Interacts with MAP3K8, MAPK, RAS and RAF. Post-translationally, phosphorylated on Ser-475 by MARK3.

The protein localises to the cytoplasm. Its subcellular location is the membrane. The enzyme catalyses L-seryl-[protein] + ATP = O-phospho-L-seryl-[protein] + ADP + H(+). It carries out the reaction L-threonyl-[protein] + ATP = O-phospho-L-threonyl-[protein] + ADP + H(+). In terms of biological role, location-regulated scaffold connecting MEK to RAF. Has very low protein kinase activity and can phosphorylate MAP2K1 at several Ser and Thr residues with very low efficiency (in vitro). Acts as MAP2K1/MEK1-dependent allosteric activator of BRAF; upon binding to MAP2K1/MEK1, dimerizes with BRAF and promotes BRAF-mediated phosphorylation of MAP2K1/MEK1. Interaction with BRAF enhances KSR2-mediated phosphorylation of MAP2K1 (in vitro). Blocks MAP3K8 kinase activity and MAP3K8-mediated signaling. Acts as a negative regulator of MAP3K3-mediated activation of ERK, JNK and NF-kappa-B pathways, inhibiting MAP3K3-mediated interleukin-8 production. In Mus musculus (Mouse), this protein is Kinase suppressor of Ras 2.